The primary structure comprises 424 residues: 3-ketoacyl-CoA thiolase A, peroxisomal (424 aa).

Residues 1–26 (MHRLQVVLGHLAGRPESSSALQAAPC) constitute a peroxisome transit peptide. Positions 1–26 (MHRLQVVLGHLAGRPESSSALQAAPC) are PTS2-type peroxisomal targeting signal. The Acyl-thioester intermediate role is filled by cysteine 123. N6-acetyllysine is present on residues lysine 173 and lysine 234. Active-site proton acceptor residues include histidine 377 and cysteine 408.

The protein belongs to the thiolase-like superfamily. Thiolase family. In terms of assembly, homodimer. Interacts (via PTS2-type peroxisomal targeting signal region) with PEX7; leading to its translocation into peroxisomes. As to expression, mainly expressed in liver and intestine.

The protein resides in the peroxisome. It carries out the reaction an acyl-CoA + acetyl-CoA = a 3-oxoacyl-CoA + CoA. The enzyme catalyses 2 acetyl-CoA = acetoacetyl-CoA + CoA. The catalysed reaction is tetradecanoyl-CoA + acetyl-CoA = 3-oxohexadecanoyl-CoA + CoA. It catalyses the reaction hexanoyl-CoA + acetyl-CoA = 3-oxooctanoyl-CoA + CoA. It carries out the reaction 3-oxohexadecanedioyl-CoA + CoA = tetradecanedioyl-CoA + acetyl-CoA. The enzyme catalyses 3-oxo-(6Z,9Z,12Z,15Z,18Z,21Z)-tetracosahexaenoyl-CoA + CoA = (4Z,7Z,10Z,13Z,16Z,19Z)-docosahexaenoyl-CoA + acetyl-CoA. It participates in lipid metabolism; peroxisomal fatty acid beta-oxidation. Functionally, responsible for the thiolytic cleavage of straight chain 3-keto fatty acyl-CoAs (3-oxoacyl-CoAs). Plays an important role in fatty acid peroxisomal beta-oxidation. Catalyzes the cleavage of short, medium, long, and very long straight chain 3-oxoacyl-CoAs. This Mus musculus (Mouse) protein is 3-ketoacyl-CoA thiolase A, peroxisomal.